Here is a 34-residue protein sequence, read N- to C-terminus: Dermaseptin-H5 (34 aa).

In terms of tissue distribution, expressed by the skin glands.

The protein resides in the secreted. Functionally, has antimicrobial activity. This chain is Dermaseptin-H5, found in Pithecopus hypochondrialis (Orange-legged leaf frog).